The chain runs to 176 residues: Secreted LysM effector ELP2 (176 aa).

The signal sequence occupies residues 1–18; the sequence is MQFSIFTVLAAAASFAVA. The span at 31-45 shows a compositional bias: low complexity; that stretch reads TSAAANPSPTTSGAA. Positions 31-50 are disordered; sequence TSAAANPSPTTSGAANPSPT. Residues 58-102 form the LysM 1 domain; it reads HKTTVKAGQTLTTIAERFHSGICDIAWQNKLENPNVIFVGQVLLV. N111 carries an N-linked (GlcNAc...) asparagine glycan. The LysM 2 domain maps to 129 to 173; that stretch reads ATYTIKSGDTFFAVAQSLGITTDSLTGANPGVVPENLQIDQVINV.

This sequence belongs to the secreted LysM effector family. As to quaternary structure, forms homodimers in a chitin-independent manner through interactions at the N-termini of EPL2 monomers. Homodimers are further polymerized in a chitin-dependent manner.

It is found in the secreted. Secreted effector that enables the plant pathogenic fungus to manipulate host defenses for successful infection. Binds chitin oligomers and polymer with high affinity and plays a dual role, not only in the suppression of chitin-triggered immune responses, but also in appressorium function. Does not protect fungal hyphae against plant chitinases but suppresses chitin-triggered plant immune responses. Chitin-induced polymerization of homodimers forms a contiguous ELP2 highly oligomeric super-complexe that may precipitate at infection sites to eliminate chitin oligomers, and thus suppress the activation of chitin-induced plant immunity. The sequence is that of Secreted LysM effector ELP2 from Colletotrichum higginsianum (strain IMI 349063) (Crucifer anthracnose fungus).